Here is a 269-residue protein sequence, read N- to C-terminus: Formamidopyrimidine-DNA glycosylase (269 aa).

The active-site Schiff-base intermediate with DNA is proline 2. Glutamate 3 serves as the catalytic Proton donor. The active-site Proton donor; for beta-elimination activity is the lysine 57. 3 residues coordinate DNA: histidine 90, arginine 109, and lysine 150. The FPG-type zinc finger occupies 235 to 269; sequence QVYGRKGEPCRVCGTPIVATKHAQRATFYCRQCQK. Arginine 259 (proton donor; for delta-elimination activity) is an active-site residue.

This sequence belongs to the FPG family. Monomer. Requires Zn(2+) as cofactor.

It catalyses the reaction Hydrolysis of DNA containing ring-opened 7-methylguanine residues, releasing 2,6-diamino-4-hydroxy-5-(N-methyl)formamidopyrimidine.. It carries out the reaction 2'-deoxyribonucleotide-(2'-deoxyribose 5'-phosphate)-2'-deoxyribonucleotide-DNA = a 3'-end 2'-deoxyribonucleotide-(2,3-dehydro-2,3-deoxyribose 5'-phosphate)-DNA + a 5'-end 5'-phospho-2'-deoxyribonucleoside-DNA + H(+). In terms of biological role, involved in base excision repair of DNA damaged by oxidation or by mutagenic agents. Acts as a DNA glycosylase that recognizes and removes damaged bases. Has a preference for oxidized purines, such as 7,8-dihydro-8-oxoguanine (8-oxoG). Has AP (apurinic/apyrimidinic) lyase activity and introduces nicks in the DNA strand. Cleaves the DNA backbone by beta-delta elimination to generate a single-strand break at the site of the removed base with both 3'- and 5'-phosphates. The polypeptide is Formamidopyrimidine-DNA glycosylase (Escherichia coli O157:H7).